A 151-amino-acid polypeptide reads, in one-letter code: Probable cGMP 3',5'-cyclic phosphodiesterase subunit delta (151 aa).

It belongs to the PDE6D/unc-119 family. Interacts with Pde6.

The protein localises to the nucleus. It localises to the cytoplasm. The sequence is that of Probable cGMP 3',5'-cyclic phosphodiesterase subunit delta from Drosophila willistoni (Fruit fly).